A 388-amino-acid polypeptide reads, in one-letter code: Leucine aminopeptidase 1 (388 aa).

The signal sequence occupies residues 1–19 (MRSSVLFSLYAATLVAAVA). A propeptide spanning residues 20–88 (HPKDPQIVLQ…TLNHKLSTES (69 aa)) is cleaved from the precursor. N-linked (GlcNAc...) asparagine glycosylation occurs at Asn-98. 4 residues coordinate Zn(2+): His-187, Asp-206, Glu-245, and Asp-272. Cys-321 and Cys-325 are disulfide-bonded. His-354 is a binding site for Zn(2+).

Belongs to the peptidase M28 family. M28E subfamily. Monomer. Requires Zn(2+) as cofactor.

Its subcellular location is the secreted. Functionally, extracellular aminopeptidase that allows assimilation of proteinaceous substrates. The sequence is that of Leucine aminopeptidase 1 (LAP1) from Leptosphaeria maculans (strain JN3 / isolate v23.1.3 / race Av1-4-5-6-7-8) (Blackleg fungus).